We begin with the raw amino-acid sequence, 555 residues long: 4-coumarate--CoA ligase-like 9 (555 aa).

6 residues coordinate ATP: S200, S201, G202, T203, T204, and K208. Y248 lines the (E)-4-coumaroyl-AMP pocket. R269 serves as a coordination point for CoA. The SBD1 stretch occupies residues 271–342; that stretch reads DLRTFLRALV…RKFPGVQVEE (72 aa). A320 is a (E)-4-coumaroyl-AMP binding site. ATP contacts are provided by E342, A343, T347, D431, and R446. The (E)-4-coumaroyl-AMP site is built by A343 and T347. Residues 343–410 form an SBD2 region; the sequence is AYGLTEHSCI…VRSQSVMQGY (68 aa). Residues K448 and K452 each contribute to the (E)-4-coumaroyl-AMP site. Residues K454 and G455 each contribute to the CoA site. Residue K537 participates in ATP binding.

Belongs to the ATP-dependent AMP-binding enzyme family. In terms of assembly, interacts with STS1. Mg(2+) serves as cofactor.

It carries out the reaction (E)-4-coumarate + ATP + CoA = (E)-4-coumaroyl-CoA + AMP + diphosphate. The enzyme catalyses (E)-4-coumarate + ATP + H(+) = (E)-4-coumaroyl-AMP + diphosphate. It catalyses the reaction (E)-4-coumaroyl-AMP + CoA = (E)-4-coumaroyl-CoA + AMP + H(+). Functionally, carboxylate--CoA ligase that may use 4-coumarate as substrate. Follows a two-step reaction mechanism, wherein the carboxylate substrate first undergoes adenylation by ATP, followed by a thioesterification in the presence of CoA to yield the final CoA thioester. The polypeptide is 4-coumarate--CoA ligase-like 9 (4CLL9) (Oryza sativa subsp. japonica (Rice)).